Consider the following 48-residue polypeptide: Protein YodE (48 aa).

This chain is Protein YodE, found in Escherichia coli (strain K12).